We begin with the raw amino-acid sequence, 840 residues long: Leucine-zipper-like transcriptional regulator 1 (840 aa).

Alanine 2 bears the N-acetylalanine mark. Kelch repeat units lie at residues alanine 79–serine 128, methionine 130–aspartate 185, leucine 187–aspartate 238, lysine 239–tyrosine 285, histidine 295–alanine 341, and alanine 399–glycine 450. 2 BTB domains span residues cysteine 443–arginine 537 and cysteine 667–proline 736.

The protein belongs to the LZTR1 family. Homodimer. Component of the BCR(LZTR1) E3 ubiquitin ligase complex, at least composed of CUL3, LZTR1 and RBX1. Interacts with Ras (K-Ras/KRAS, N-Ras/NRAS and H-Ras/HRAS). Interacts with RAF1. Interacts with SHOC2. Interacts with PPP1CB. Post-translationally, phosphorylated on tyrosine upon induction of apoptosis, leading to its degradation by the proteasome.

The protein localises to the endomembrane system. Its subcellular location is the recycling endosome. It is found in the golgi apparatus. It functions in the pathway protein modification; protein ubiquitination. In terms of biological role, substrate-specific adapter of a BCR (BTB-CUL3-RBX1) E3 ubiquitin-protein ligase complex that mediates ubiquitination of Ras (K-Ras/KRAS, N-Ras/NRAS and H-Ras/HRAS). Is a negative regulator of RAS-MAPK signaling that acts by controlling Ras levels and decreasing Ras association with membranes. This is Leucine-zipper-like transcriptional regulator 1 from Homo sapiens (Human).